Consider the following 210-residue polypeptide: Small heat shock protein hspG6 (210 aa).

Positions 34–210 (KTIIDKLPPM…YSNTIKININ (177 aa)) constitute a sHSP domain. A disordered region spans residues 93–151 (VIEKSTSSSTLDSKEDEPSIEEFEDDIKPKSKSDNTTVSTTTTATTKENKEDENKTKST). A compositionally biased stretch (low complexity) spans 126 to 138 (DNTTVSTTTTATT). A compositionally biased stretch (basic and acidic residues) spans 139–151 (KENKEDENKTKST).

The protein belongs to the small heat shock protein (HSP20) family.

The protein is Small heat shock protein hspG6 (hspG6) of Dictyostelium discoideum (Social amoeba).